A 211-amino-acid polypeptide reads, in one-letter code: Large ribosomal subunit protein uL4 (211 aa).

A disordered region spans residues 48 to 89 (KRAGTASTKTRVEVRGGGAKPWRQKGTGRARAGSRTSPLWRG).

The protein belongs to the universal ribosomal protein uL4 family. As to quaternary structure, part of the 50S ribosomal subunit.

Functionally, one of the primary rRNA binding proteins, this protein initially binds near the 5'-end of the 23S rRNA. It is important during the early stages of 50S assembly. It makes multiple contacts with different domains of the 23S rRNA in the assembled 50S subunit and ribosome. Forms part of the polypeptide exit tunnel. The protein is Large ribosomal subunit protein uL4 of Desulfotalea psychrophila (strain LSv54 / DSM 12343).